The sequence spans 145 residues: D-aminoacyl-tRNA deacylase (145 aa).

Residues 137–138 (GP) carry the Gly-cisPro motif, important for rejection of L-amino acids motif.

This sequence belongs to the DTD family. Homodimer.

The protein localises to the cytoplasm. It catalyses the reaction glycyl-tRNA(Ala) + H2O = tRNA(Ala) + glycine + H(+). The catalysed reaction is a D-aminoacyl-tRNA + H2O = a tRNA + a D-alpha-amino acid + H(+). In terms of biological role, an aminoacyl-tRNA editing enzyme that deacylates mischarged D-aminoacyl-tRNAs. Also deacylates mischarged glycyl-tRNA(Ala), protecting cells against glycine mischarging by AlaRS. Acts via tRNA-based rather than protein-based catalysis; rejects L-amino acids rather than detecting D-amino acids in the active site. By recycling D-aminoacyl-tRNA to D-amino acids and free tRNA molecules, this enzyme counteracts the toxicity associated with the formation of D-aminoacyl-tRNA entities in vivo and helps enforce protein L-homochirality. This is D-aminoacyl-tRNA deacylase from Methylacidiphilum infernorum (isolate V4) (Methylokorus infernorum (strain V4)).